Consider the following 331-residue polypeptide: L-lactate dehydrogenase A chain (331 aa).

NAD(+) contacts are provided by residues 29 to 57 (GMVG…MEDK) and Arg98. The substrate site is built by Arg105, Asn137, and Arg168. Position 137 (Asn137) interacts with NAD(+). Catalysis depends on His192, which acts as the Proton acceptor. Residue Thr247 coordinates substrate.

Belongs to the LDH/MDH superfamily. LDH family. As to quaternary structure, homotetramer.

The protein localises to the cytoplasm. It carries out the reaction (S)-lactate + NAD(+) = pyruvate + NADH + H(+). Its pathway is fermentation; pyruvate fermentation to lactate; (S)-lactate from pyruvate: step 1/1. In terms of biological role, interconverts simultaneously and stereospecifically pyruvate and lactate with concomitant interconversion of NADH and NAD(+). This is L-lactate dehydrogenase A chain (ldha) from Champsocephalus gunnari (Mackerel icefish).